The following is a 327-amino-acid chain: Acetyl-coenzyme A carboxylase carboxyl transferase subunit alpha (327 aa).

In terms of domain architecture, CoA carboxyltransferase C-terminal spans 46-299 (LEARAIQLRR…RQVLLRHLKD (254 aa)).

Belongs to the AccA family. In terms of assembly, acetyl-CoA carboxylase is a heterohexamer composed of biotin carboxyl carrier protein (AccB), biotin carboxylase (AccC) and two subunits each of ACCase subunit alpha (AccA) and ACCase subunit beta (AccD).

The protein resides in the cytoplasm. It carries out the reaction N(6)-carboxybiotinyl-L-lysyl-[protein] + acetyl-CoA = N(6)-biotinyl-L-lysyl-[protein] + malonyl-CoA. Its pathway is lipid metabolism; malonyl-CoA biosynthesis; malonyl-CoA from acetyl-CoA: step 1/1. Functionally, component of the acetyl coenzyme A carboxylase (ACC) complex. First, biotin carboxylase catalyzes the carboxylation of biotin on its carrier protein (BCCP) and then the CO(2) group is transferred by the carboxyltransferase to acetyl-CoA to form malonyl-CoA. This Synechococcus elongatus (strain ATCC 33912 / PCC 7942 / FACHB-805) (Anacystis nidulans R2) protein is Acetyl-coenzyme A carboxylase carboxyl transferase subunit alpha.